We begin with the raw amino-acid sequence, 465 residues long: Methionine aminopeptidase 2-2 (465 aa).

Basic residues predominate over residues 1-11; the sequence is MGSKTPHNHRR. Residues 1 to 89 form a disordered region; the sequence is MGSKTPHNHR…KKKKNTKELE (89 aa). Acidic residues predominate over residues 43 to 54; the sequence is GESEGGEDEDDD. A compositionally biased stretch (basic residues) spans 73–84; the sequence is RNKRKKKKKKKN. Residue His217 participates in substrate binding. Residues Asp238, Asp249, and His318 each coordinate a divalent metal cation. Residue His326 coordinates substrate. Residues Glu351 and Glu446 each coordinate a divalent metal cation.

The protein belongs to the peptidase M24A family. Methionine aminopeptidase eukaryotic type 2 subfamily. It depends on Co(2+) as a cofactor. Requires Zn(2+) as cofactor. Mn(2+) is required as a cofactor. Fe(2+) serves as cofactor.

The protein localises to the cytoplasm. The catalysed reaction is Release of N-terminal amino acids, preferentially methionine, from peptides and arylamides.. Functionally, cotranslationally removes the N-terminal methionine from nascent proteins. The N-terminal methionine is often cleaved when the second residue in the primary sequence is small and uncharged (Met-Ala-, Cys, Gly, Pro, Ser, Thr, or Val). The protein is Methionine aminopeptidase 2-2 of Ajellomyces capsulatus (strain G186AR / H82 / ATCC MYA-2454 / RMSCC 2432) (Darling's disease fungus).